The chain runs to 447 residues: KICSTOR complex protein ITFG2 (447 aa).

An FG-GAP 1; atypical repeat occupies 19–48 (FPHAICLGDVDNDTLNELVVGDTSGKVSVY). Residue Ser-104 is modified to Phosphoserine. One copy of the FG-GAP 2; atypical repeat lies at 126-155 (NTKVMLISDIDGDGCRELVVGYTDRVVRAF). At Ser-220 the chain carries Phosphoserine.

Part of the KICSTOR complex composed of KPTN, ITFG2, KICS2 and SZT2. SZT2 probably serves as a link between the other three proteins in the KICSTOR complex and may mediate the direct interaction with the GATOR complex via GATOR1. The KICSTOR complex interacts directly with the GATOR1 complex and most probably indirectly with the GATOR2 complex in an amino acid-independent manner.

It localises to the lysosome membrane. Functionally, as part of the KICSTOR complex functions in the amino acid-sensing branch of the TORC1 signaling pathway. Recruits, in an amino acid-independent manner, the GATOR1 complex to the lysosomal membranes and allows its interaction with GATOR2 and the RAG GTPases. Functions upstream of the RAG GTPases and is required to negatively regulate mTORC1 signaling in absence of amino acids. In absence of the KICSTOR complex mTORC1 is constitutively localized to the lysosome and activated. The KICSTOR complex is also probably involved in the regulation of mTORC1 by glucose. This Homo sapiens (Human) protein is KICSTOR complex protein ITFG2.